The sequence spans 476 residues: Aspartyl/glutamyl-tRNA(Asn/Gln) amidotransferase subunit B (476 aa).

It belongs to the GatB/GatE family. GatB subfamily. In terms of assembly, heterotrimer of A, B and C subunits.

It catalyses the reaction L-glutamyl-tRNA(Gln) + L-glutamine + ATP + H2O = L-glutaminyl-tRNA(Gln) + L-glutamate + ADP + phosphate + H(+). It carries out the reaction L-aspartyl-tRNA(Asn) + L-glutamine + ATP + H2O = L-asparaginyl-tRNA(Asn) + L-glutamate + ADP + phosphate + 2 H(+). Allows the formation of correctly charged Asn-tRNA(Asn) or Gln-tRNA(Gln) through the transamidation of misacylated Asp-tRNA(Asn) or Glu-tRNA(Gln) in organisms which lack either or both of asparaginyl-tRNA or glutaminyl-tRNA synthetases. The reaction takes place in the presence of glutamine and ATP through an activated phospho-Asp-tRNA(Asn) or phospho-Glu-tRNA(Gln). The sequence is that of Aspartyl/glutamyl-tRNA(Asn/Gln) amidotransferase subunit B from Vesicomyosocius okutanii subsp. Calyptogena okutanii (strain HA).